The following is a 193-amino-acid chain: Chaperone protein TorD (193 aa).

This sequence belongs to the TorD/DmsD family. TorD subfamily.

Its subcellular location is the cytoplasm. Involved in the biogenesis of TorA. Acts on TorA before the insertion of the molybdenum cofactor and, as a result, probably favors a conformation of the apoenzyme that is competent for acquiring the cofactor. The polypeptide is Chaperone protein TorD (Histophilus somni (strain 129Pt) (Haemophilus somnus)).